Consider the following 274-residue polypeptide: uncharacterized protein (274 aa).

An N-terminal signal peptide occupies residues 1 to 19; that stretch reads MKRINKVLLSLLCLVIAYA.

This is an uncharacterized protein from Rickettsia prowazekii (strain Madrid E).